A 145-amino-acid chain; its full sequence is 3-dehydroquinate dehydratase (145 aa).

The active-site Proton acceptor is tyrosine 24. Substrate-binding residues include asparagine 75, histidine 81, and aspartate 88. The active-site Proton donor is the histidine 102. Residues 103–104 (LS) and arginine 113 contribute to the substrate site.

Belongs to the type-II 3-dehydroquinase family. Homododecamer.

It catalyses the reaction 3-dehydroquinate = 3-dehydroshikimate + H2O. It functions in the pathway metabolic intermediate biosynthesis; chorismate biosynthesis; chorismate from D-erythrose 4-phosphate and phosphoenolpyruvate: step 3/7. Functionally, catalyzes a trans-dehydration via an enolate intermediate. The polypeptide is 3-dehydroquinate dehydratase (Chelativorans sp. (strain BNC1)).